The sequence spans 385 residues: Meiotic recombination protein SPO11-2 (385 aa).

The 146-residue stretch at 24–169 folds into the Topo IIA-type catalytic domain; sequence LPPAEVRARI…LGIMASSRGA (146 aa). The O-(5'-phospho-DNA)-tyrosine intermediate role is filled by Tyr-126. Mg(2+) is bound by residues Glu-219 and Asp-272.

Belongs to the TOP6A family. Interacts with TOP6B. The cofactor is Mg(2+).

The protein resides in the nucleus. The enzyme catalyses ATP-dependent breakage, passage and rejoining of double-stranded DNA.. Functionally, required for meiotic recombination. Mediates DNA cleavage that forms the double-strand breaks (DSB) that initiate meiotic recombination. In Oryza sativa subsp. japonica (Rice), this protein is Meiotic recombination protein SPO11-2 (SPO11-2).